Reading from the N-terminus, the 354-residue chain is Protein RecA (354 aa).

67–74 serves as a coordination point for ATP; that stretch reads GPESSGKT.

The protein belongs to the RecA family.

It is found in the cytoplasm. Can catalyze the hydrolysis of ATP in the presence of single-stranded DNA, the ATP-dependent uptake of single-stranded DNA by duplex DNA, and the ATP-dependent hybridization of homologous single-stranded DNAs. It interacts with LexA causing its activation and leading to its autocatalytic cleavage. The protein is Protein RecA of Enterobacter agglomerans (Erwinia herbicola).